Consider the following 387-residue polypeptide: S-adenosylmethionine synthase (387 aa).

His16 lines the ATP pocket. Residue Asp18 coordinates Mg(2+). A K(+)-binding site is contributed by Glu44. Glu57 and Gln100 together coordinate L-methionine. The segment at 100–110 (QSADIAVGVDE) is flexible loop. Residues 165-167 (DAK), Asp241, 247-248 (RK), Ala264, and Lys268 contribute to the ATP site. Position 241 (Asp241) interacts with L-methionine. Residue Lys272 participates in L-methionine binding.

Belongs to the AdoMet synthase family. As to quaternary structure, homotetramer; dimer of dimers. Mg(2+) serves as cofactor. It depends on K(+) as a cofactor.

The protein localises to the cytoplasm. It catalyses the reaction L-methionine + ATP + H2O = S-adenosyl-L-methionine + phosphate + diphosphate. It functions in the pathway amino-acid biosynthesis; S-adenosyl-L-methionine biosynthesis; S-adenosyl-L-methionine from L-methionine: step 1/1. Functionally, catalyzes the formation of S-adenosylmethionine (AdoMet) from methionine and ATP. The overall synthetic reaction is composed of two sequential steps, AdoMet formation and the subsequent tripolyphosphate hydrolysis which occurs prior to release of AdoMet from the enzyme. This Marinomonas sp. (strain MWYL1) protein is S-adenosylmethionine synthase.